The chain runs to 446 residues: Serine decarboxylase 3 (446 aa).

H162 serves as a coordination point for substrate. At K274 the chain carries N6-(pyridoxal phosphate)lysine.

This sequence belongs to the group II decarboxylase family. It depends on pyridoxal 5'-phosphate as a cofactor.

The enzyme catalyses L-serine + H(+) = ethanolamine + CO2. Functionally, catalyzes the biosynthesis of ethanolamine from serine. Decarboxylation of free serine is the major source of ethanolamine production in plants and ethanolamine metabolism is crucial for the synthesis of choline, phosphatidylethanolamine (PE) and phosphatidylcholine (PC), and thus for plant growth. The chain is Serine decarboxylase 3 from Oryza sativa subsp. japonica (Rice).